A 498-amino-acid chain; its full sequence is Glycerol kinase (498 aa).

Thr12 is a binding site for ADP. Residues Thr12, Thr13, and Ser14 each coordinate ATP. Thr12 provides a ligand contact to sn-glycerol 3-phosphate. Arg16 serves as a coordination point for ADP. Sn-glycerol 3-phosphate contacts are provided by Arg82, Glu83, Tyr134, and Asp243. Residues Arg82, Glu83, Tyr134, Asp243, and Gln244 each coordinate glycerol. ADP is bound by residues Thr265 and Gly308. Residues Thr265, Gly308, Gln312, and Gly409 each coordinate ATP. ADP contacts are provided by Gly409 and Asn413.

This sequence belongs to the FGGY kinase family. Homotetramer and homodimer (in equilibrium).

The catalysed reaction is glycerol + ATP = sn-glycerol 3-phosphate + ADP + H(+). It participates in polyol metabolism; glycerol degradation via glycerol kinase pathway; sn-glycerol 3-phosphate from glycerol: step 1/1. Its activity is regulated as follows. Activated by phosphorylation and inhibited by fructose 1,6-bisphosphate (FBP). Functionally, key enzyme in the regulation of glycerol uptake and metabolism. Catalyzes the phosphorylation of glycerol to yield sn-glycerol 3-phosphate. This Clostridium botulinum (strain Langeland / NCTC 10281 / Type F) protein is Glycerol kinase.